Consider the following 519-residue polypeptide: Maltose/maltodextrin transport system permease protein MalF (519 aa).

The Cytoplasmic segment spans residues 1–18 (MRKNPMDVIKKKHWWQSD). Residues 19-41 (ALKWSVLGLLGLLVGYLVVLMYA) traverse the membrane as a helical segment. At 42 to 44 (QGE) the chain is on the periplasmic side. The helical transmembrane segment at 45–62 (YLFAITTLILSSAGLYIF) threads the bilayer. Over 63–74 (ANRKAYAWRYVY) the chain is Cytoplasmic. The chain crosses the membrane as a helical span at residues 75-97 (PGMAGMGLFVLFPLVCTIAIAFT). At 98–288 (NYSSTNQLTF…QKPFLAIFVW (191 aa)) the chain is on the periplasmic side. In terms of domain architecture, ABC transmembrane type-1 spans 286 to 510 (FVWTVVFSLI…LLVGALAIVN (225 aa)). Residues 289–311 (TVVFSLITVFLTVAVGMVLACLV) traverse the membrane as a helical segment. Residues 312 to 323 (QWEALRGKAVYR) lie on the Cytoplasmic side of the membrane. The helical transmembrane segment at 324–346 (VLLILPYAVPSFISILIFKGLFN) threads the bilayer. At 347–374 (QSFGEINMMLSALFGVKPAWFSDPTTAR) the chain is on the periplasmic side. Residues 375-397 (TMLIIVNTWLGYPYMMILCMGLL) form a helical membrane-spanning segment. The Cytoplasmic portion of the chain corresponds to 398–417 (KAIPDDLYEASAMDGAGPFQ). Residues 418-440 (NFFKITLPLLIKPLTPLMIASFA) traverse the membrane as a helical segment. Residues 441 to 488 (FNFNNFVLIQLLTNGGPDRLGTTTPAGYTDLLVNYTYRIAFEGGGGQD) are Periplasmic-facing. Residues 489–511 (FGLAAAIATLIFLLVGALAIVNL) traverse the membrane as a helical segment. The Cytoplasmic segment spans residues 512–519 (KATRMKFD).

The protein belongs to the binding-protein-dependent transport system permease family. MalFG subfamily. The complex is composed of two ATP-binding proteins (MalK), two transmembrane proteins (MalG and MalF) and a solute-binding protein (MalE).

It is found in the cell inner membrane. Functionally, part of the ABC transporter complex MalEFGK involved in maltose/maltodextrin import. Probably responsible for the translocation of the substrate across the membrane. The sequence is that of Maltose/maltodextrin transport system permease protein MalF (malF) from Escherichia coli O6:H1 (strain CFT073 / ATCC 700928 / UPEC).